The primary structure comprises 182 residues: Large ribosomal subunit protein uL5 (182 aa).

The protein belongs to the universal ribosomal protein uL5 family. Part of the 50S ribosomal subunit; part of the 5S rRNA/L5/L18/L25 subcomplex. Contacts the 5S rRNA and the P site tRNA. Forms a bridge to the 30S subunit in the 70S ribosome.

This is one of the proteins that bind and probably mediate the attachment of the 5S RNA into the large ribosomal subunit, where it forms part of the central protuberance. In the 70S ribosome it contacts protein S13 of the 30S subunit (bridge B1b), connecting the 2 subunits; this bridge is implicated in subunit movement. Contacts the P site tRNA; the 5S rRNA and some of its associated proteins might help stabilize positioning of ribosome-bound tRNAs. The polypeptide is Large ribosomal subunit protein uL5 (Thermosipho melanesiensis (strain DSM 12029 / CIP 104789 / BI429)).